A 112-amino-acid chain; its full sequence is Photosystem II reaction center Psb28 protein (112 aa).

Belongs to the Psb28 family. As to quaternary structure, part of the photosystem II complex.

The protein resides in the cellular thylakoid membrane. In Microcystis aeruginosa (strain NIES-843 / IAM M-2473), this protein is Photosystem II reaction center Psb28 protein.